We begin with the raw amino-acid sequence, 211 residues long: Probable oligoribonuclease (211 aa).

The Exonuclease domain occupies 38 to 202; it reads IVWMDLEMTG…DDIRESIKEL (165 aa). The active site involves Tyr159.

Belongs to the oligoribonuclease family.

Functionally, 3'-to-5' exoribonuclease specific for small oligoribonucleotides. This chain is Probable oligoribonuclease, found in Drosophila melanogaster (Fruit fly).